Reading from the N-terminus, the 381-residue chain is DnaJ-related protein spj1 (381 aa).

One can recognise a J domain in the interval 5–74; sequence NFSQKQILGV…RKIYDAYGEE (70 aa). Residues 72-93 are disordered; it reads GEEGLNGQPGGPGGGPGEGFPG. Residues 78 to 93 show a composition bias toward gly residues; that stretch reads GQPGGPGGGPGEGFPG. The CR-type zinc finger occupies 138–225; the sequence is GGSFTLEIPV…CKGERVAEVV (88 aa). 4 CXXCXGXG motif repeats span residues 151 to 158, 172 to 179, 199 to 206, and 213 to 220; these read CSVCSGQG, CPVCGGSG, CNACNGNG, and CPRCKGER. Residues 378–381 carry the Prevents secretion from ER motif; it reads FDEL.

The protein resides in the endoplasmic reticulum. This Schizosaccharomyces pombe (strain 972 / ATCC 24843) (Fission yeast) protein is DnaJ-related protein spj1 (spj1).